Here is a 424-residue protein sequence, read N- to C-terminus: Pachytene checkpoint protein 2 homolog (424 aa).

G171–T178 serves as a coordination point for ATP.

This sequence belongs to the AAA ATPase family. PCH2 subfamily.

Its function is as follows. Plays a key role in chromosome recombination and chromosome structure development during meiosis. Required at early steps in meiotic recombination that leads to non-crossovers pathways. Also needed for efficient completion of homologous synapsis by influencing crossover distribution along the chromosomes affecting both crossovers and non-crossovers pathways. This chain is Pachytene checkpoint protein 2 homolog (trip13), found in Danio rerio (Zebrafish).